Consider the following 213-residue polypeptide: Orotate phosphoribosyltransferase (213 aa).

Position 26 (lysine 26) interacts with 5-phospho-alpha-D-ribose 1-diphosphate. 34 to 35 (FF) contributes to the orotate binding site. 5-phospho-alpha-D-ribose 1-diphosphate is bound by residues 72–73 (YK), arginine 99, lysine 100, lysine 103, histidine 105, and 124–132 (DDVITAGTA). 2 residues coordinate orotate: threonine 128 and arginine 156.

The protein belongs to the purine/pyrimidine phosphoribosyltransferase family. PyrE subfamily. In terms of assembly, homodimer. Mg(2+) serves as cofactor.

It catalyses the reaction orotidine 5'-phosphate + diphosphate = orotate + 5-phospho-alpha-D-ribose 1-diphosphate. It functions in the pathway pyrimidine metabolism; UMP biosynthesis via de novo pathway; UMP from orotate: step 1/2. Catalyzes the transfer of a ribosyl phosphate group from 5-phosphoribose 1-diphosphate to orotate, leading to the formation of orotidine monophosphate (OMP). This chain is Orotate phosphoribosyltransferase, found in Serratia proteamaculans (strain 568).